Consider the following 421-residue polypeptide: 3-isopropylmalate dehydratase large subunit (421 aa).

[4Fe-4S] cluster is bound by residues cysteine 302, cysteine 362, and cysteine 365.

The protein belongs to the aconitase/IPM isomerase family. LeuC type 2 subfamily. Heterodimer of LeuC and LeuD. The cofactor is [4Fe-4S] cluster.

The catalysed reaction is (2R,3S)-3-isopropylmalate = (2S)-2-isopropylmalate. It participates in amino-acid biosynthesis; L-leucine biosynthesis; L-leucine from 3-methyl-2-oxobutanoate: step 2/4. Catalyzes the isomerization between 2-isopropylmalate and 3-isopropylmalate, via the formation of 2-isopropylmaleate. The sequence is that of 3-isopropylmalate dehydratase large subunit from Campylobacter curvus (strain 525.92).